Here is a 543-residue protein sequence, read N- to C-terminus: CTP synthase (543 aa).

An amidoligase domain region spans residues 1–267 (MKQTKYIFVT…LSPIAEILDL (267 aa)). Ser15 lines the CTP pocket. Ser15 is a binding site for UTP. ATP-binding positions include 16 to 21 (SLGKGI) and Asp73. Asp73 and Glu141 together coordinate Mg(2+). CTP is bound by residues 148 to 150 (DIE), 188 to 193 (KTKPTQ), and Lys224. UTP is bound by residues 188–193 (KTKPTQ) and Lys224. The Glutamine amidotransferase type-1 domain maps to 292 to 543 (KIAFVGKYVD…IKAAINYEDN (252 aa)). L-glutamine is bound at residue Gly354. Cys381 (nucleophile; for glutamine hydrolysis) is an active-site residue. L-glutamine-binding positions include 382–385 (LGMQ), Glu405, and Arg473. Catalysis depends on residues His516 and Glu518.

This sequence belongs to the CTP synthase family. In terms of assembly, homotetramer.

The enzyme catalyses UTP + L-glutamine + ATP + H2O = CTP + L-glutamate + ADP + phosphate + 2 H(+). The catalysed reaction is L-glutamine + H2O = L-glutamate + NH4(+). It catalyses the reaction UTP + NH4(+) + ATP = CTP + ADP + phosphate + 2 H(+). It participates in pyrimidine metabolism; CTP biosynthesis via de novo pathway; CTP from UDP: step 2/2. With respect to regulation, allosterically activated by GTP, when glutamine is the substrate; GTP has no effect on the reaction when ammonia is the substrate. The allosteric effector GTP functions by stabilizing the protein conformation that binds the tetrahedral intermediate(s) formed during glutamine hydrolysis. Inhibited by the product CTP, via allosteric rather than competitive inhibition. In terms of biological role, catalyzes the ATP-dependent amination of UTP to CTP with either L-glutamine or ammonia as the source of nitrogen. Regulates intracellular CTP levels through interactions with the four ribonucleotide triphosphates. The protein is CTP synthase of Campylobacter jejuni subsp. jejuni serotype O:23/36 (strain 81-176).